The sequence spans 261 residues: Cytochrome c oxidase subunit 3 (261 aa).

At Met1–Pro15 the chain is on the mitochondrial matrix side. A helical transmembrane segment spans residues Trp16–Trp34. Topologically, residues Phe35–Met40 are mitochondrial intermembrane. A helical transmembrane segment spans residues Thr41–Thr66. Topologically, residues Phe67–Thr72 are mitochondrial matrix. The chain crosses the membrane as a helical span at residues Ser73 to Ser105. Over Leu106–Glu128 the chain is Mitochondrial intermembrane. The helical transmembrane segment at Val129–Met152 threads the bilayer. Residues Glu153–Asn155 are Mitochondrial matrix-facing. The chain crosses the membrane as a helical span at residues Arg156–Glu183. Topologically, residues Ala184–Asp190 are mitochondrial intermembrane. The helical transmembrane segment at Gly191–Leu223 threads the bilayer. Residues Lys224–His232 are Mitochondrial matrix-facing. The helical transmembrane segment at Phe233–Ile256 threads the bilayer. Residues Tyr257–Ser261 are Mitochondrial intermembrane-facing.

The protein belongs to the cytochrome c oxidase subunit 3 family. In terms of assembly, component of the cytochrome c oxidase (complex IV, CIV), a multisubunit enzyme composed of 14 subunits. The complex is composed of a catalytic core of 3 subunits MT-CO1, MT-CO2 and MT-CO3, encoded in the mitochondrial DNA, and 11 supernumerary subunits COX4I, COX5A, COX5B, COX6A, COX6B, COX6C, COX7A, COX7B, COX7C, COX8 and NDUFA4, which are encoded in the nuclear genome. The complex exists as a monomer or a dimer and forms supercomplexes (SCs) in the inner mitochondrial membrane with NADH-ubiquinone oxidoreductase (complex I, CI) and ubiquinol-cytochrome c oxidoreductase (cytochrome b-c1 complex, complex III, CIII), resulting in different assemblies (supercomplex SCI(1)III(2)IV(1) and megacomplex MCI(2)III(2)IV(2)).

The protein resides in the mitochondrion inner membrane. It catalyses the reaction 4 Fe(II)-[cytochrome c] + O2 + 8 H(+)(in) = 4 Fe(III)-[cytochrome c] + 2 H2O + 4 H(+)(out). Functionally, component of the cytochrome c oxidase, the last enzyme in the mitochondrial electron transport chain which drives oxidative phosphorylation. The respiratory chain contains 3 multisubunit complexes succinate dehydrogenase (complex II, CII), ubiquinol-cytochrome c oxidoreductase (cytochrome b-c1 complex, complex III, CIII) and cytochrome c oxidase (complex IV, CIV), that cooperate to transfer electrons derived from NADH and succinate to molecular oxygen, creating an electrochemical gradient over the inner membrane that drives transmembrane transport and the ATP synthase. Cytochrome c oxidase is the component of the respiratory chain that catalyzes the reduction of oxygen to water. Electrons originating from reduced cytochrome c in the intermembrane space (IMS) are transferred via the dinuclear copper A center (CU(A)) of subunit 2 and heme A of subunit 1 to the active site in subunit 1, a binuclear center (BNC) formed by heme A3 and copper B (CU(B)). The BNC reduces molecular oxygen to 2 water molecules using 4 electrons from cytochrome c in the IMS and 4 protons from the mitochondrial matrix. The protein is Cytochrome c oxidase subunit 3 (MT-CO3) of Damaliscus lunatus (Tsessebe).